Reading from the N-terminus, the 342-residue chain is Isopentenyl-diphosphate delta-isomerase (342 aa).

Residue 11 to 12 (RK) participates in substrate binding. FMN contacts are provided by residues serine 68, 69–71 (SMT), serine 99, and asparagine 127. 99–101 (SMR) is a substrate binding site. Glutamine 162 is a substrate binding site. Glutamate 163 lines the Mg(2+) pocket. FMN is bound by residues lysine 194, threonine 224, 274–276 (GLK), and 295–296 (AG).

The protein belongs to the IPP isomerase type 2 family. As to quaternary structure, homooctamer. Dimer of tetramers. It depends on FMN as a cofactor. NADPH serves as cofactor. Requires Mg(2+) as cofactor.

The protein localises to the cytoplasm. It carries out the reaction isopentenyl diphosphate = dimethylallyl diphosphate. Involved in the biosynthesis of isoprenoids. Catalyzes the 1,3-allylic rearrangement of the homoallylic substrate isopentenyl (IPP) to its allylic isomer, dimethylallyl diphosphate (DMAPP). This is Isopentenyl-diphosphate delta-isomerase from Rickettsia rickettsii (strain Iowa).